The sequence spans 667 residues: DNA ligase (667 aa).

NAD(+) is bound by residues 32 to 36 (DKDYD) and 80 to 81 (SL). Residue K121 is the N6-AMP-lysine intermediate of the active site. Residues R143, E178, and K314 each contribute to the NAD(+) site. Zn(2+) is bound by residues C407, C410, C423, and C429. One can recognise a BRCT domain in the interval 587–667 (IVESIFKDKT…EFEKMLGRES (81 aa)).

The protein belongs to the NAD-dependent DNA ligase family. LigA subfamily. Requires Mg(2+) as cofactor. Mn(2+) is required as a cofactor.

It carries out the reaction NAD(+) + (deoxyribonucleotide)n-3'-hydroxyl + 5'-phospho-(deoxyribonucleotide)m = (deoxyribonucleotide)n+m + AMP + beta-nicotinamide D-nucleotide.. In terms of biological role, DNA ligase that catalyzes the formation of phosphodiester linkages between 5'-phosphoryl and 3'-hydroxyl groups in double-stranded DNA using NAD as a coenzyme and as the energy source for the reaction. It is essential for DNA replication and repair of damaged DNA. The chain is DNA ligase from Clostridium botulinum (strain Alaska E43 / Type E3).